Consider the following 299-residue polypeptide: Nucleotide-binding protein SCO1952 (299 aa).

23 to 30 contributes to the ATP binding site; sequence GMSGAGRS. 74 to 77 contributes to the GTP binding site; the sequence is DVRG.

Belongs to the RapZ-like family.

Its function is as follows. Displays ATPase and GTPase activities. This chain is Nucleotide-binding protein SCO1952, found in Streptomyces coelicolor (strain ATCC BAA-471 / A3(2) / M145).